We begin with the raw amino-acid sequence, 576 residues long: Probable DNA ligase (576 aa).

Residue glutamate 235 participates in ATP binding. Catalysis depends on lysine 237, which acts as the N6-AMP-lysine intermediate. ATP contacts are provided by arginine 242, arginine 257, glutamate 285, phenylalanine 324, arginine 422, and lysine 428.

It belongs to the ATP-dependent DNA ligase family. Requires Mg(2+) as cofactor.

The catalysed reaction is ATP + (deoxyribonucleotide)n-3'-hydroxyl + 5'-phospho-(deoxyribonucleotide)m = (deoxyribonucleotide)n+m + AMP + diphosphate.. Functionally, DNA ligase that seals nicks in double-stranded DNA during DNA replication, DNA recombination and DNA repair. The chain is Probable DNA ligase from Koribacter versatilis (strain Ellin345).